The chain runs to 125 residues: MARIAGVNIPTNKRVVIALRYVYGIGPSTAQSICNKLEIPDAKRVNELSDDEIVKIRELIDSELRVEGDLRRETAMNIKRLMDLGCYRGLRHRRGLPVRGQRTHTNARTRKGKAVAIAGKKKVTR.

This sequence belongs to the universal ribosomal protein uS13 family. Part of the 30S ribosomal subunit. Forms a loose heterodimer with protein S19. Forms two bridges to the 50S subunit in the 70S ribosome.

Its function is as follows. Located at the top of the head of the 30S subunit, it contacts several helices of the 16S rRNA. In the 70S ribosome it contacts the 23S rRNA (bridge B1a) and protein L5 of the 50S subunit (bridge B1b), connecting the 2 subunits; these bridges are implicated in subunit movement. Contacts the tRNAs in the A and P-sites. The polypeptide is Small ribosomal subunit protein uS13 (Gluconobacter oxydans (strain 621H) (Gluconobacter suboxydans)).